A 320-amino-acid polypeptide reads, in one-letter code: Cytochrome f (320 aa).

The N-terminal stretch at 1–35 is a signal peptide; that stretch reads MQNRNTFSWVKDQMSRFISVSIMIYVITRTSISNA. Tyr36, Cys56, Cys59, and His60 together coordinate heme. The helical transmembrane segment at 286-306 threads the bilayer; the sequence is VQGLLFFFASVILAQIFLVLK.

It belongs to the cytochrome f family. The 4 large subunits of the cytochrome b6-f complex are cytochrome b6, subunit IV (17 kDa polypeptide, petD), cytochrome f and the Rieske protein, while the 4 small subunits are PetG, PetL, PetM and PetN. The complex functions as a dimer. Heme is required as a cofactor.

Its subcellular location is the plastid. It localises to the chloroplast thylakoid membrane. Functionally, component of the cytochrome b6-f complex, which mediates electron transfer between photosystem II (PSII) and photosystem I (PSI), cyclic electron flow around PSI, and state transitions. This Ceratophyllum demersum (Rigid hornwort) protein is Cytochrome f.